Consider the following 203-residue polypeptide: Octanoyltransferase (203 aa).

Positions 30–203 constitute a BPL/LPL catalytic domain; that stretch reads EDQDNYFFIT…HIIKEGRKLV (174 aa). Substrate is bound by residues 69–76, 135–137, and 148–150; these read RGGSVTFH, SVG, and GIS. C166 serves as the catalytic Acyl-thioester intermediate.

This sequence belongs to the LipB family.

The protein resides in the cytoplasm. The enzyme catalyses octanoyl-[ACP] + L-lysyl-[protein] = N(6)-octanoyl-L-lysyl-[protein] + holo-[ACP] + H(+). Its pathway is protein modification; protein lipoylation via endogenous pathway; protein N(6)-(lipoyl)lysine from octanoyl-[acyl-carrier-protein]: step 1/2. Catalyzes the transfer of endogenously produced octanoic acid from octanoyl-acyl-carrier-protein onto the lipoyl domains of lipoate-dependent enzymes. Lipoyl-ACP can also act as a substrate although octanoyl-ACP is likely to be the physiological substrate. This is Octanoyltransferase from Persephonella marina (strain DSM 14350 / EX-H1).